We begin with the raw amino-acid sequence, 121 residues long: Small ribosomal subunit protein uS13 (121 aa).

Residues 94-121 (GLPVRGQRTRTNSRTRKGPKKGAAALKK) form a disordered region.

It belongs to the universal ribosomal protein uS13 family. Part of the 30S ribosomal subunit. Forms a loose heterodimer with protein S19. Forms two bridges to the 50S subunit in the 70S ribosome.

Functionally, located at the top of the head of the 30S subunit, it contacts several helices of the 16S rRNA. In the 70S ribosome it contacts the 23S rRNA (bridge B1a) and protein L5 of the 50S subunit (bridge B1b), connecting the 2 subunits; these bridges are implicated in subunit movement. Contacts the tRNAs in the A and P-sites. The protein is Small ribosomal subunit protein uS13 of Leptothrix cholodnii (strain ATCC 51168 / LMG 8142 / SP-6) (Leptothrix discophora (strain SP-6)).